The primary structure comprises 328 residues: MSLLKTSERGFSRELPDVQSTLPDVRINLTRVGVKNVKKLVEVTRPGKRPVIFISNFDIFVDLPGSLKGANLSRNFEVIDEVLQSAIEGEVKEIEQLCSRVARRLLDKHEYADRTEVQMRSEFMVAGETPVTGTLCQEVVKVFASAIAQRTFKDPIVRKSIGAEVTGMTACPCAQNIMQERAREVMENLDIAKDKIESFFKEVPMATHNQRGRGFLSIETDDESHVKLEKIIMILKQSMSTPIFELLKRGDEGHVVLSAHKNPRFVEDCVREMARRVHAEFGDLPGDSVVTIAQDNEESIHQHDAFAERQATIAELADEINGENLDVS.

This sequence belongs to the GTP cyclohydrolase IV family. Homodimer. It depends on Fe(2+) as a cofactor.

It catalyses the reaction GTP + H2O = 7,8-dihydroneopterin 2',3'-cyclic phosphate + formate + diphosphate + H(+). Its pathway is cofactor biosynthesis; 5,6,7,8-tetrahydromethanopterin biosynthesis. In terms of biological role, converts GTP to 7,8-dihydro-D-neopterin 2',3'-cyclic phosphate, the first intermediate in the biosynthesis of coenzyme methanopterin. This is GTP cyclohydrolase MptA from Methanospirillum hungatei JF-1 (strain ATCC 27890 / DSM 864 / NBRC 100397 / JF-1).